The sequence spans 301 residues: Envoplakin-like protein (301 aa).

A coiled-coil region spans residues 1-88 (MQASADQVER…ERVTQECAEY (88 aa)). 2 disordered regions span residues 18–41 (RLQQ…TGSS) and 118–166 (GLRR…PEPI). Polar residues predominate over residues 26 to 41 (SEQSQALQHQQETGSS). Over residues 136 to 151 (GAQHRAEGDQRPRRAA) the composition is skewed to basic and acidic residues.

The protein belongs to the plakin or cytolinker family.

This is Envoplakin-like protein (EVPLL) from Homo sapiens (Human).